The following is a 150-amino-acid chain: Large ribosomal subunit protein uL15 (150 aa).

The segment at 12 to 43 (AKKRKKRVGCGESSGHGKTSGRGHKGQKARAG) is disordered. A compositionally biased stretch (basic residues) spans 30–39 (TSGRGHKGQK).

It belongs to the universal ribosomal protein uL15 family. As to quaternary structure, part of the 50S ribosomal subunit.

Functionally, binds to the 23S rRNA. This chain is Large ribosomal subunit protein uL15, found in Methylacidiphilum infernorum (isolate V4) (Methylokorus infernorum (strain V4)).